The sequence spans 248 residues: mRNA-decapping protein OPG122 (248 aa).

The region spanning 45 to 227 is the Nudix hydrolase domain; sequence HKRVSVSAIL…IAKYALDTAK (183 aa). The Nudix box motif lies at 125-147; that stretch reads GGIPKRGENVPECLSREIKEEVN.

It belongs to the Nudix hydrolase family. As to quaternary structure, interacts with the late transcription elongation factor VLTF-4/OPG110. Interacts with the late transcription factors VLTF-1. Mg(2+) serves as cofactor. It depends on Mn(2+) as a cofactor.

The protein localises to the host mitochondrion. Functionally, acts with RNA polymerase to initiate transcription from late gene promoters. In Cynomys gunnisoni (Gunnison's prairie dog), this protein is mRNA-decapping protein OPG122 (OPG122).